A 480-amino-acid polypeptide reads, in one-letter code: Cytochrome b-c1 complex subunit 1, mitochondrial (480 aa).

Residues 1 to 34 (MAASAVCRAACSGTQALLRTCRSPALLRLPALRG) constitute a mitochondrion transit peptide. N6-acetyllysine is present on residues K111 and K138. K163 carries the N6-acetyllysine; alternate modification. K163 is modified (N6-succinyllysine; alternate). S212 carries the phosphoserine modification. A Phosphothreonine modification is found at T214.

It belongs to the peptidase M16 family. UQCRC1/QCR1 subfamily. As to quaternary structure, component of the ubiquinol-cytochrome c oxidoreductase (cytochrome b-c1 complex, complex III, CIII), a multisubunit enzyme composed of 11 subunits. The complex is composed of 3 respiratory subunits cytochrome b, cytochrome c1 and Rieske protein UQCRFS1, 2 core protein subunits UQCRC1/QCR1 and UQCRC2/QCR2, and 6 low-molecular weight protein subunits UQCRH/QCR6, UQCRB/QCR7, UQCRQ/QCR8, UQCR10/QCR9, UQCR11/QCR10 and subunit 9, the cleavage product of Rieske protein UQCRFS1. The complex exists as an obligatory dimer and forms supercomplexes (SCs) in the inner mitochondrial membrane with NADH-ubiquinone oxidoreductase (complex I, CI) and cytochrome c oxidase (complex IV, CIV), resulting in different assemblies (supercomplex SCI(1)III(2)IV(1) and megacomplex MCI(2)III(2)IV(2)). Interacts with UQCC6. Interacts with STMP1.

It localises to the mitochondrion inner membrane. Component of the ubiquinol-cytochrome c oxidoreductase, a multisubunit transmembrane complex that is part of the mitochondrial electron transport chain which drives oxidative phosphorylation. The respiratory chain contains 3 multisubunit complexes succinate dehydrogenase (complex II, CII), ubiquinol-cytochrome c oxidoreductase (cytochrome b-c1 complex, complex III, CIII) and cytochrome c oxidase (complex IV, CIV), that cooperate to transfer electrons derived from NADH and succinate to molecular oxygen, creating an electrochemical gradient over the inner membrane that drives transmembrane transport and the ATP synthase. The cytochrome b-c1 complex catalyzes electron transfer from ubiquinol to cytochrome c, linking this redox reaction to translocation of protons across the mitochondrial inner membrane, with protons being carried across the membrane as hydrogens on the quinol. In the process called Q cycle, 2 protons are consumed from the matrix, 4 protons are released into the intermembrane space and 2 electrons are passed to cytochrome c. The 2 core subunits UQCRC1/QCR1 and UQCRC2/QCR2 are homologous to the 2 mitochondrial-processing peptidase (MPP) subunits beta-MPP and alpha-MPP respectively, and they seem to have preserved their MPP processing properties. May be involved in the in situ processing of UQCRFS1 into the mature Rieske protein and its mitochondrial targeting sequence (MTS)/subunit 9 when incorporated into complex III. Seems to play an important role in the maintenance of proper mitochondrial function in nigral dopaminergic neurons. This is Cytochrome b-c1 complex subunit 1, mitochondrial (Uqcrc1) from Rattus norvegicus (Rat).